We begin with the raw amino-acid sequence, 351 residues long: MVTKESIISDLEKENVGPEFGEFLNSLQTDLNSEKPLIEQVKSQLETHFNLGPETQEFSRKNDNAPVDQLLTNYYNNYEVNVLEFVLQMGFCKDLSIPLNVWFVLDMISQLSTSKQDLPLDYYLVLNNSHTGKYSDFVRYLIYEAVGAEIHCFEQGDMPQQYRSSRWEDKVKGPALANRGPIRGNVGAGDRKITFHLLCKKTARMILVGDDRETDFEMSDRSFVTLLLDYYQRVGTTKKIDLLLLTNNYDTNMNNKLQQLKILESLNMLKSNCYVLDYQITADQVTANFNSYVEGIPAFRRHEIANFLKKRRTPKNADELIFKYVGRWNICYQKKFHQGNISIHQISGYLD.

As to quaternary structure, heterododecamer of 4 alpha, 4 beta and 4 gamma chains. The gamma chain bridges the N-terminal halves of the alpha and beta subunits.

The protein localises to the cytoplasm. It functions in the pathway carbohydrate degradation; glycolysis; D-glyceraldehyde 3-phosphate and glycerone phosphate from D-glucose: step 3/4. Its function is as follows. Structural subunit of pyrophosphate--fructose 6-phosphate 1-phosphotransferase. Not required for catalytic activity. Fine-tunes allosteric regulation of the ATP-PFK by ATP, fructose 2,6-bisphosphate and AMP. The protein is ATP-dependent 6-phosphofructokinase subunit gamma (PFK3) of Komagataella phaffii (strain GS115 / ATCC 20864) (Yeast).